A 191-amino-acid polypeptide reads, in one-letter code: Potassium-transporting ATPase KdpC subunit (191 aa).

The chain crosses the membrane as a helical span at residues 10–30 (ITLVFCVFFSVFYILVLWLFA).

Belongs to the KdpC family. As to quaternary structure, the system is composed of three essential subunits: KdpA, KdpB and KdpC.

It is found in the cell inner membrane. Its function is as follows. Part of the high-affinity ATP-driven potassium transport (or Kdp) system, which catalyzes the hydrolysis of ATP coupled with the electrogenic transport of potassium into the cytoplasm. This subunit acts as a catalytic chaperone that increases the ATP-binding affinity of the ATP-hydrolyzing subunit KdpB by the formation of a transient KdpB/KdpC/ATP ternary complex. In Bacteroides fragilis (strain ATCC 25285 / DSM 2151 / CCUG 4856 / JCM 11019 / LMG 10263 / NCTC 9343 / Onslow / VPI 2553 / EN-2), this protein is Potassium-transporting ATPase KdpC subunit.